Reading from the N-terminus, the 223-residue chain is NAD(P)H-hydrate epimerase (223 aa).

The YjeF N-terminal domain maps to 9 to 209 (MQKIDTYTVN…DIGLLTPPDF (201 aa)). (6S)-NADPHX is bound at residue 57-61 (NNGAD). K(+) is bound by residues asparagine 58 and aspartate 119. (6S)-NADPHX is bound by residues 123–129 (GTGLNNL) and aspartate 152. Residue threonine 155 participates in K(+) binding.

It belongs to the NnrE/AIBP family. K(+) serves as cofactor.

The enzyme catalyses (6R)-NADHX = (6S)-NADHX. It carries out the reaction (6R)-NADPHX = (6S)-NADPHX. Catalyzes the epimerization of the S- and R-forms of NAD(P)HX, a damaged form of NAD(P)H that is a result of enzymatic or heat-dependent hydration. This is a prerequisite for the S-specific NAD(P)H-hydrate dehydratase to allow the repair of both epimers of NAD(P)HX. The protein is NAD(P)H-hydrate epimerase of Leuconostoc gelidum subsp. gasicomitatum (strain DSM 15947 / CCUG 46042 / CECT 5767 / JCM 12535 / LMG 18811 / NBRC 113245 / TB1-10) (Leuconostoc gasicomitatum).